A 447-amino-acid polypeptide reads, in one-letter code: Cysteine--tRNA ligase (447 aa).

Residue cysteine 28 coordinates Zn(2+). A 'HIGH' region motif is present at residues 30-40; sequence PTVYNYIHIGN. Positions 211, 236, and 240 each coordinate Zn(2+). The 'KMSKS' region motif lies at 268-272; the sequence is KMSKS. An ATP-binding site is contributed by lysine 271.

Belongs to the class-I aminoacyl-tRNA synthetase family. Monomer. Zn(2+) serves as cofactor.

The protein resides in the cytoplasm. The catalysed reaction is tRNA(Cys) + L-cysteine + ATP = L-cysteinyl-tRNA(Cys) + AMP + diphosphate. This Streptococcus pyogenes serotype M3 (strain ATCC BAA-595 / MGAS315) protein is Cysteine--tRNA ligase.